Reading from the N-terminus, the 336-residue chain is Ornithine carbamoyltransferase, catabolic (336 aa).

Carbamoyl phosphate contacts are provided by residues 57–60, Q84, R108, and 135–138; these read STRT and HPTQ. Residues N168, D232, and 236–237 contribute to the L-ornithine site; that span reads SM. Carbamoyl phosphate-binding positions include 274-275 and R321; that span reads CL.

This sequence belongs to the aspartate/ornithine carbamoyltransferase superfamily. OTCase family.

It is found in the cytoplasm. The catalysed reaction is carbamoyl phosphate + L-ornithine = L-citrulline + phosphate + H(+). It functions in the pathway amino-acid degradation; L-arginine degradation via ADI pathway; carbamoyl phosphate from L-arginine: step 2/2. Its function is as follows. Reversibly catalyzes the transfer of the carbamoyl group from carbamoyl phosphate (CP) to the N(epsilon) atom of ornithine (ORN) to produce L-citrulline. The sequence is that of Ornithine carbamoyltransferase, catabolic from Burkholderia mallei (strain ATCC 23344).